The sequence spans 542 residues: Chaperonin GroEL (542 aa).

ATP contacts are provided by residues 29-32 (TMGP), 86-90 (DGTTT), G413, 476-478 (NAA), and D492. The tract at residues 521–542 (KPDPNANNQAPAAPQGGMGGMM) is disordered. Residues 524–535 (PNANNQAPAAPQ) show a composition bias toward low complexity.

It belongs to the chaperonin (HSP60) family. In terms of assembly, forms a cylinder of 14 subunits composed of two heptameric rings stacked back-to-back. Interacts with the co-chaperonin GroES.

It is found in the cytoplasm. The catalysed reaction is ATP + H2O + a folded polypeptide = ADP + phosphate + an unfolded polypeptide.. In terms of biological role, together with its co-chaperonin GroES, plays an essential role in assisting protein folding. The GroEL-GroES system forms a nano-cage that allows encapsulation of the non-native substrate proteins and provides a physical environment optimized to promote and accelerate protein folding. This Limosilactobacillus reuteri subsp. reuteri (strain JCM 1112) (Lactobacillus reuteri) protein is Chaperonin GroEL.